We begin with the raw amino-acid sequence, 257 residues long: Imidazole glycerol phosphate synthase subunit HisF (257 aa).

Active-site residues include Asp-11 and Asp-130.

The protein belongs to the HisA/HisF family. In terms of assembly, heterodimer of HisH and HisF.

The protein localises to the cytoplasm. The catalysed reaction is 5-[(5-phospho-1-deoxy-D-ribulos-1-ylimino)methylamino]-1-(5-phospho-beta-D-ribosyl)imidazole-4-carboxamide + L-glutamine = D-erythro-1-(imidazol-4-yl)glycerol 3-phosphate + 5-amino-1-(5-phospho-beta-D-ribosyl)imidazole-4-carboxamide + L-glutamate + H(+). It functions in the pathway amino-acid biosynthesis; L-histidine biosynthesis; L-histidine from 5-phospho-alpha-D-ribose 1-diphosphate: step 5/9. Functionally, IGPS catalyzes the conversion of PRFAR and glutamine to IGP, AICAR and glutamate. The HisF subunit catalyzes the cyclization activity that produces IGP and AICAR from PRFAR using the ammonia provided by the HisH subunit. This Tolumonas auensis (strain DSM 9187 / NBRC 110442 / TA 4) protein is Imidazole glycerol phosphate synthase subunit HisF.